Here is a 1117-residue protein sequence, read N- to C-terminus: A disintegrin and metalloproteinase with thrombospondin motifs 6 (1117 aa).

Positions 1–21 (MEILWKTLTWILSLIMASSEF) are cleaved as a signal peptide. Positions 22-244 (HSDHRLSYSS…NTHIHHRQKR (223 aa)) are excised as a propeptide. N-linked (GlcNAc...) asparagine glycosylation is found at Asn99, Asn172, Asn222, and Asn234. Residues 250–468 (RFVETLVVAD…GRGTCLDNEP (219 aa)) enclose the Peptidase M12B domain. Cystine bridges form between Cys326–Cys387, Cys362–Cys369, Cys381–Cys463, Cys420–Cys447, Cys490–Cys512, Cys501–Cys519, Cys507–Cys542, Cys532–Cys547, Cys570–Cys607, Cys574–Cys612, and Cys585–Cys597. His403 lines the Zn(2+) pocket. Glu404 is an active-site residue. Residues His407 and His413 each coordinate Zn(2+). A Disintegrin domain is found at 495–557 (GATSRQCKYG…VPFGTWPQSI (63 aa)). A TSP type-1 1 domain is found at 558 to 613 (DGGWGPWSLWGECSRTCGGGVSSSLRHCDSPAPSGGGKYCLGERKRYRSCNTDPCP). The segment at 717–843 (DAIEGFFNDS…GSGDNEVGFT (127 aa)) is spacer. A glycan (N-linked (GlcNAc...) asparagine) is linked at Asn724. 4 TSP type-1 domains span residues 840 to 900 (VGFT…EPCP), 902 to 960 (EWFI…QSCP), 962 to 1007 (QWVA…SKPP), and 1018 to 1073 (PPPR…SKCD). Disulfide bonds link Cys911-Cys954, Cys915-Cys959, and Cys926-Cys943. Residue Asn956 is glycosylated (N-linked (GlcNAc...) asparagine). Positions 1079-1117 (NTEECKDVNKVAYCPLVLKFKFCSRAYFRQMCCKTCQGH) constitute a PLAC domain.

Zn(2+) serves as cofactor. The precursor is cleaved by a furin endopeptidase. In terms of processing, glycosylated. Can be O-fucosylated by POFUT2 on a serine or a threonine residue found within the consensus sequence C1-X(2)-(S/T)-C2-G of the TSP type-1 repeat domains where C1 and C2 are the first and second cysteine residue of the repeat, respectively. Fucosylated repeats can then be further glycosylated by the addition of a beta-1,3-glucose residue by the glucosyltransferase, B3GALTL. Fucosylation mediates the efficient secretion of ADAMTS family members. Can also be C-glycosylated with one or two mannose molecules on tryptophan residues within the consensus sequence W-X-X-W of the TPRs, and N-glycosylated. These other glycosylations can also facilitate secretion. Expressed at low levels in placenta and barely detectable in a number of other tissues.

The protein resides in the secreted. It is found in the extracellular space. It localises to the extracellular matrix. This is A disintegrin and metalloproteinase with thrombospondin motifs 6 (ADAMTS6) from Homo sapiens (Human).